The following is a 322-amino-acid chain: MKDNFNRNIDYLRISIIDRCNLRCIYCMPEEGITNLLPHHEILSYEEILKIVEIGVDLGITKIRITGGEPLLRKGIVSFIERLARIEGIRDIGMTTNGVLLKKFAKDLYNAGLKRVNVSLDSLDENKFRAITRVGLIDDVFEGIDEAKNAGLQPVKVNVVVMKGINDDEIEKFALWSKKVEYQIRFIEFMPVGQNAWKKELFISKDEIKERIENKIGKLIPVQMKKSGPAEYFMLAGAKGFLGFISPMTTHICVRCNRLRLTADGKLRPCLFSDKEVDIKKILRSGASTEEIRETIIKTIHLKPQGMSEHTKPLRPMSTIGG.

The region spanning 4 to 229 is the Radical SAM core domain; the sequence is NFNRNIDYLR…IPVQMKKSGP (226 aa). Arg13 is a binding site for GTP. Residues Cys20 and Cys24 each contribute to the [4Fe-4S] cluster site. Residue Tyr26 coordinates S-adenosyl-L-methionine. Cys27 is a [4Fe-4S] cluster binding site. Arg64 contacts GTP. Gly68 is a binding site for S-adenosyl-L-methionine. Residue Thr95 coordinates GTP. Ser119 lines the S-adenosyl-L-methionine pocket. Lys156 lines the GTP pocket. Residue Met190 participates in S-adenosyl-L-methionine binding. The [4Fe-4S] cluster site is built by Cys253 and Cys256. A GTP-binding site is contributed by 258–260; it reads RLR. Residue Cys270 coordinates [4Fe-4S] cluster.

This sequence belongs to the radical SAM superfamily. MoaA family. Monomer and homodimer. Requires [4Fe-4S] cluster as cofactor.

It carries out the reaction GTP + AH2 + S-adenosyl-L-methionine = (8S)-3',8-cyclo-7,8-dihydroguanosine 5'-triphosphate + 5'-deoxyadenosine + L-methionine + A + H(+). The protein operates within cofactor biosynthesis; molybdopterin biosynthesis. Functionally, catalyzes the cyclization of GTP to (8S)-3',8-cyclo-7,8-dihydroguanosine 5'-triphosphate. This chain is GTP 3',8-cyclase, found in Thermodesulfovibrio yellowstonii (strain ATCC 51303 / DSM 11347 / YP87).